Reading from the N-terminus, the 227-residue chain is ATP-dependent dethiobiotin synthetase BioD (227 aa).

Residue 13–18 (NIGKTV) coordinates ATP. Position 17 (Thr-17) interacts with Mg(2+). Lys-38 is a catalytic residue. ATP is bound by residues Asp-55 and 116 to 119 (EGIG). Mg(2+) is bound by residues Asp-55 and Glu-116.

Belongs to the dethiobiotin synthetase family. In terms of assembly, homodimer. Mg(2+) serves as cofactor.

The protein localises to the cytoplasm. It catalyses the reaction (7R,8S)-7,8-diammoniononanoate + CO2 + ATP = (4R,5S)-dethiobiotin + ADP + phosphate + 3 H(+). Its pathway is cofactor biosynthesis; biotin biosynthesis; biotin from 7,8-diaminononanoate: step 1/2. Catalyzes a mechanistically unusual reaction, the ATP-dependent insertion of CO2 between the N7 and N8 nitrogen atoms of 7,8-diaminopelargonic acid (DAPA, also called 7,8-diammoniononanoate) to form a ureido ring. The chain is ATP-dependent dethiobiotin synthetase BioD from Buchnera aphidicola subsp. Baizongia pistaciae (strain Bp).